Reading from the N-terminus, the 996-residue chain is Cilia- and flagella-associated protein 251 (996 aa).

WD repeat units follow at residues 73 to 114 (GHCN…PKKT), 118 to 164 (PHPN…EPCL), 168 to 211 (EFDR…KGFN), 219 to 258 (PSLK…EKVD), 282 to 319 (KGSN…IAWF), 399 to 438 (SIVS…SVLS), 445 to 485 (TDKE…WQNS), 494 to 533 (QGKP…FDVN), 547 to 593 (IHHS…YSKQ), 615 to 658 (EQET…FKFC), and 719 to 759 (AHPD…LEQI). The segment at 971–996 (DLEGEERDDNIEDQYEDEENEEYDQD) is disordered.

The protein localises to the cell projection. The protein resides in the cilium. Functionally, as component of a spoke-associated complex, regulates ciliary mobility by mediating a stable and functional assembly of the radial spoke 3 (RS3). The protein is Cilia- and flagella-associated protein 251 of Tetrahymena thermophila (strain SB210).